Here is a 421-residue protein sequence, read N- to C-terminus: Aspartokinase (421 aa).

ATP is bound at residue 7–10 (KYGG). 25 to 30 (RIVETK) is a substrate binding site. Residue serine 41 participates in ATP binding. Substrate is bound by residues 45–49 (DTTDD), glutamate 74, 125–126 (LD), 151–154 (RGGS), and serine 154. ATP is bound by residues 174–175 (TD), 180–185 (FTADPR), and lysine 210. 2 ACT domains span residues 267-348 (VTVV…GKVS) and 349-421 (LIGA…GTGR). Substrate-binding positions include aspartate 274, 274-279 (DVPGYA), 292-294 (NID), glutamine 298, 360-361 (VT), 374-375 (NI), and 381-382 (SE).

Belongs to the aspartokinase family. In terms of assembly, heterotetramer consisting of 2 isoforms Alpha (catalytic and regulation) and of a homodimer of 2 isoforms Beta (regulation).

It carries out the reaction L-aspartate + ATP = 4-phospho-L-aspartate + ADP. It participates in amino-acid biosynthesis; L-lysine biosynthesis via DAP pathway; (S)-tetrahydrodipicolinate from L-aspartate: step 1/4. It functions in the pathway amino-acid biosynthesis; L-methionine biosynthesis via de novo pathway; L-homoserine from L-aspartate: step 1/3. The protein operates within amino-acid biosynthesis; L-threonine biosynthesis; L-threonine from L-aspartate: step 1/5. Its activity is regulated as follows. Feedback inhibition by lysine and threonine. Functionally, catalyzes the phosphorylation of the beta-carboxyl group of aspartic acid with ATP to yield 4-phospho-L-aspartate, which is involved in the branched biosynthetic pathway leading to the biosynthesis of amino acids lysine, threonine, isoleucine and methionine. The polypeptide is Aspartokinase (ask) (Mycolicibacterium smegmatis (Mycobacterium smegmatis)).